A 272-amino-acid chain; its full sequence is Shikimate dehydrogenase (NADP(+)) (272 aa).

Shikimate is bound by residues 14–16 (SKS) and Thr61. The active-site Proton acceptor is the Lys65. Glu77 provides a ligand contact to NADP(+). 2 residues coordinate shikimate: Asn86 and Asp102. NADP(+) contacts are provided by residues 126–130 (GAGGA), 149–154 (NRTVSR), and Met213. Residue Tyr215 participates in shikimate binding. Gly237 provides a ligand contact to NADP(+).

The protein belongs to the shikimate dehydrogenase family. Homodimer.

The enzyme catalyses shikimate + NADP(+) = 3-dehydroshikimate + NADPH + H(+). The protein operates within metabolic intermediate biosynthesis; chorismate biosynthesis; chorismate from D-erythrose 4-phosphate and phosphoenolpyruvate: step 4/7. Its function is as follows. Involved in the biosynthesis of the chorismate, which leads to the biosynthesis of aromatic amino acids. Catalyzes the reversible NADPH linked reduction of 3-dehydroshikimate (DHSA) to yield shikimate (SA). The polypeptide is Shikimate dehydrogenase (NADP(+)) (Shigella sonnei (strain Ss046)).